Consider the following 296-residue polypeptide: Tyrosine recombinase XerC (296 aa).

Positions 1 to 84 (MDKIQETFLY…TLRTFYEFWM (84 aa)) constitute a Core-binding (CB) domain. A Tyr recombinase domain is found at 105–286 (YLPQFFYEEE…SNQQLRKVYL (182 aa)). Catalysis depends on residues arginine 145, lysine 169, histidine 238, arginine 241, and histidine 264. Tyrosine 273 serves as the catalytic O-(3'-phospho-DNA)-tyrosine intermediate.

Belongs to the 'phage' integrase family. XerC subfamily. In terms of assembly, forms a cyclic heterotetrameric complex composed of two molecules of XerC and two molecules of XerD.

It is found in the cytoplasm. Site-specific tyrosine recombinase, which acts by catalyzing the cutting and rejoining of the recombining DNA molecules. The XerC-XerD complex is essential to convert dimers of the bacterial chromosome into monomers to permit their segregation at cell division. It also contributes to the segregational stability of plasmids. This is Tyrosine recombinase XerC from Staphylococcus epidermidis (strain ATCC 35984 / DSM 28319 / BCRC 17069 / CCUG 31568 / BM 3577 / RP62A).